Here is a 176-residue protein sequence, read N- to C-terminus: MTTIVSVRRNGHVVIAGDGQATLGNTVMKGNVKKVRRLYNDKVIAGFAGGTADAFTLFELFERKLEMHQGHLVKAAVELAKDWRTDRMLRKLEALLAVADENASLIITGNGDVIQPENDLIAIGSGGPYAQAAARALLENTELSAREIAEKALGIAGDICIYTNHFHTIEELNSKA.

Threonine 2 is a catalytic residue. Positions 157, 160, and 163 each coordinate Na(+).

The protein belongs to the peptidase T1B family. HslV subfamily. In terms of assembly, a double ring-shaped homohexamer of HslV is capped on each side by a ring-shaped HslU homohexamer. The assembly of the HslU/HslV complex is dependent on binding of ATP.

Its subcellular location is the cytoplasm. It carries out the reaction ATP-dependent cleavage of peptide bonds with broad specificity.. With respect to regulation, allosterically activated by HslU binding. In terms of biological role, protease subunit of a proteasome-like degradation complex believed to be a general protein degrading machinery. In Enterobacter sp. (strain 638), this protein is ATP-dependent protease subunit HslV.